A 375-amino-acid polypeptide reads, in one-letter code: Alcohol dehydrogenase 1B (375 aa).

Serine 1 carries the N-acetylserine modification. Zn(2+)-binding residues include cysteine 46, histidine 67, cysteine 97, cysteine 100, cysteine 103, cysteine 111, and cysteine 174. Residues 199–204 (GLGGVG), aspartate 223, lysine 228, 293–295 (VGV), and arginine 370 contribute to the NAD(+) site.

This sequence belongs to the zinc-containing alcohol dehydrogenase family. Class-I subfamily. In terms of assembly, multimeric (with different ratios of monomers). It depends on Zn(2+) as a cofactor.

Its subcellular location is the cytoplasm. The enzyme catalyses a primary alcohol + NAD(+) = an aldehyde + NADH + H(+). It catalyses the reaction a secondary alcohol + NAD(+) = a ketone + NADH + H(+). In Saara hardwickii (Indian spiny-tailed lizard), this protein is Alcohol dehydrogenase 1B.